We begin with the raw amino-acid sequence, 408 residues long: Probable medium-chain specific acyl-CoA dehydrogenase 2, mitochondrial (408 aa).

A mitochondrion-targeting transit peptide spans 1 to 5 (MLSRL). FAD-binding positions include 143–152 (YCVTEPGAGS) and 176–178 (WIT). A substrate-binding site is contributed by serine 152. Residue 263-266 (DMTR) participates in substrate binding. FAD is bound by residues 291–293 (RKA), 301–302 (HQ), and 355–359 (MLFRC). Residue glutamate 382 is the Proton acceptor of the active site. Substrate is bound at residue glycine 383. 384–386 (TSQ) is an FAD binding site. Arginine 394 contributes to the substrate binding site.

Belongs to the acyl-CoA dehydrogenase family. Homotetramer. FAD serves as cofactor.

It localises to the mitochondrion matrix. The catalysed reaction is a medium-chain 2,3-saturated fatty acyl-CoA + oxidized [electron-transfer flavoprotein] + H(+) = a medium-chain (2E)-enoyl-CoA + reduced [electron-transfer flavoprotein]. Its pathway is lipid metabolism; mitochondrial fatty acid beta-oxidation. Its function is as follows. This enzyme is specific for acyl chain lengths of 4 to 16. This is Probable medium-chain specific acyl-CoA dehydrogenase 2, mitochondrial from Caenorhabditis briggsae.